The chain runs to 311 residues: tRNA dimethylallyltransferase (311 aa).

Residue 13-20 (GPTASGKT) participates in ATP binding. 15–20 (TASGKT) serves as a coordination point for substrate. 2 interaction with substrate tRNA regions span residues 38-41 (DSMQ) and 166-170 (QRGLR).

It belongs to the IPP transferase family. As to quaternary structure, monomer. Mg(2+) is required as a cofactor.

The enzyme catalyses adenosine(37) in tRNA + dimethylallyl diphosphate = N(6)-dimethylallyladenosine(37) in tRNA + diphosphate. Functionally, catalyzes the transfer of a dimethylallyl group onto the adenine at position 37 in tRNAs that read codons beginning with uridine, leading to the formation of N6-(dimethylallyl)adenosine (i(6)A). The protein is tRNA dimethylallyltransferase of Staphylococcus aureus (strain MSSA476).